Consider the following 265-residue polypeptide: Octanoyltransferase (265 aa).

The BPL/LPL catalytic domain maps to 35–254 (DEVPDTVLLL…HLRDVLENAE (220 aa)). Substrate is bound by residues 73–80 (RGGKITWH), 184–186 (AIG), and 197–199 (GFA). Residue cysteine 215 is the Acyl-thioester intermediate of the active site.

It belongs to the LipB family.

Its subcellular location is the cytoplasm. The enzyme catalyses octanoyl-[ACP] + L-lysyl-[protein] = N(6)-octanoyl-L-lysyl-[protein] + holo-[ACP] + H(+). It participates in protein modification; protein lipoylation via endogenous pathway; protein N(6)-(lipoyl)lysine from octanoyl-[acyl-carrier-protein]: step 1/2. Its function is as follows. Catalyzes the transfer of endogenously produced octanoic acid from octanoyl-acyl-carrier-protein onto the lipoyl domains of lipoate-dependent enzymes. Lipoyl-ACP can also act as a substrate although octanoyl-ACP is likely to be the physiological substrate. This Streptomyces coelicolor (strain ATCC BAA-471 / A3(2) / M145) protein is Octanoyltransferase.